The following is a 227-amino-acid chain: Cytochrome c oxidase subunit 2 (227 aa).

Topologically, residues 1-14 (MAYPVQLGFQDAAS) are mitochondrial intermembrane. A helical transmembrane segment spans residues 15–45 (PIMEELLYFHDHTLMIMFLISSLVLYIISLM). Residues 46–59 (LTTELMHTNTMDAQ) are Mitochondrial matrix-facing. Residues 60-87 (EVETVWTILPAAILILIALPSLRILYMM) traverse the membrane as a helical segment. Residues 88–227 (DEITTPSLTL…HFEEWLLSML (140 aa)) lie on the Mitochondrial intermembrane side of the membrane. Cu cation-binding residues include histidine 161, cysteine 196, glutamate 198, cysteine 200, histidine 204, and methionine 207. Glutamate 198 contacts Mg(2+).

The protein belongs to the cytochrome c oxidase subunit 2 family. As to quaternary structure, component of the cytochrome c oxidase (complex IV, CIV), a multisubunit enzyme composed of 14 subunits. The complex is composed of a catalytic core of 3 subunits MT-CO1, MT-CO2 and MT-CO3, encoded in the mitochondrial DNA, and 11 supernumerary subunits COX4I, COX5A, COX5B, COX6A, COX6B, COX6C, COX7A, COX7B, COX7C, COX8 and NDUFA4, which are encoded in the nuclear genome. The complex exists as a monomer or a dimer and forms supercomplexes (SCs) in the inner mitochondrial membrane with NADH-ubiquinone oxidoreductase (complex I, CI) and ubiquinol-cytochrome c oxidoreductase (cytochrome b-c1 complex, complex III, CIII), resulting in different assemblies (supercomplex SCI(1)III(2)IV(1) and megacomplex MCI(2)III(2)IV(2)). Found in a complex with TMEM177, COA6, COX18, COX20, SCO1 and SCO2. Interacts with TMEM177 in a COX20-dependent manner. Interacts with COX20. Interacts with COX16. Cu cation is required as a cofactor.

It localises to the mitochondrion inner membrane. It catalyses the reaction 4 Fe(II)-[cytochrome c] + O2 + 8 H(+)(in) = 4 Fe(III)-[cytochrome c] + 2 H2O + 4 H(+)(out). Component of the cytochrome c oxidase, the last enzyme in the mitochondrial electron transport chain which drives oxidative phosphorylation. The respiratory chain contains 3 multisubunit complexes succinate dehydrogenase (complex II, CII), ubiquinol-cytochrome c oxidoreductase (cytochrome b-c1 complex, complex III, CIII) and cytochrome c oxidase (complex IV, CIV), that cooperate to transfer electrons derived from NADH and succinate to molecular oxygen, creating an electrochemical gradient over the inner membrane that drives transmembrane transport and the ATP synthase. Cytochrome c oxidase is the component of the respiratory chain that catalyzes the reduction of oxygen to water. Electrons originating from reduced cytochrome c in the intermembrane space (IMS) are transferred via the dinuclear copper A center (CU(A)) of subunit 2 and heme A of subunit 1 to the active site in subunit 1, a binuclear center (BNC) formed by heme A3 and copper B (CU(B)). The BNC reduces molecular oxygen to 2 water molecules using 4 electrons from cytochrome c in the IMS and 4 protons from the mitochondrial matrix. The polypeptide is Cytochrome c oxidase subunit 2 (MT-CO2) (Hapalemur griseus (Gray gentle lemur)).